A 350-amino-acid polypeptide reads, in one-letter code: D-alanine--D-alanine ligase (350 aa).

An ATP-grasp domain is found at 143 to 344; the sequence is KRILSTFGIS…FKSLINKLIL (202 aa). Residue 172–227 coordinates ATP; the sequence is INNIKFPCCIKPSNQGSSFGVNVANDFISLKESIDVAFLYSKKILIEPFIQGREIE. Mg(2+) contacts are provided by D298, E311, and N313.

Belongs to the D-alanine--D-alanine ligase family. Mg(2+) is required as a cofactor. It depends on Mn(2+) as a cofactor.

It localises to the cytoplasm. The enzyme catalyses 2 D-alanine + ATP = D-alanyl-D-alanine + ADP + phosphate + H(+). Its pathway is cell wall biogenesis; peptidoglycan biosynthesis. Functionally, cell wall formation. This Wigglesworthia glossinidia brevipalpis protein is D-alanine--D-alanine ligase.